A 257-amino-acid chain; its full sequence is Zinc uptake system ATP-binding protein ZurA (257 aa).

The ABC transporter domain maps to 5–241; sequence IEVNNVSYHY…ADRELEILAE (237 aa). An ATP-binding site is contributed by 37 to 44; the sequence is GPNGSGKS.

Belongs to the ABC transporter superfamily.

Its function is as follows. Involved in a zinc uptake transport system. The polypeptide is Zinc uptake system ATP-binding protein ZurA (zurA) (Listeria monocytogenes serovar 1/2a (strain ATCC BAA-679 / EGD-e)).